The primary structure comprises 351 residues: MSQQPATTSRAELVSSAVEFLLDQSIADSPLAKKVEFLESKGLTQQEIEEALQKARTGTVQASPSQQSVVPPRPPVPDYYPSAPPLPERDWKDYFIMATATAGISYGVYQFVKRYVVPKILPPSKTQLEQDKAAIDHEFQRVESLLEKFEADQKEFYQKQEAKSKKIDETLQEVDEIINKTNEKNLNNEETLKYLKLEIENIKTTLLKTLDSQKATLNAELSAMEKQLQDIKFDIKTSGIAVAPQLSTPPSESTSRQSPAAEAKPKINLNIPPTTSIPSLRDVLSREKDKDVNSDSIAQYEQRTANEKDVERSIPAWQLSASNGGSSTTSGVAGDEQKEPKRGIPAWQLNA.

Positions 54-75 (KARTGTVQASPSQQSVVPPRPP) are disordered. Residues 60 to 70 (VQASPSQQSVV) show a composition bias toward low complexity. The SH3-binding motif lies at 83 to 91 (APPLPERDW). Residues 243-351 (APQLSTPPSE…RGIPAWQLNA (109 aa)) form a disordered region. The span at 245–258 (QLSTPPSESTSRQS) shows a compositional bias: polar residues. Residues 283–293 (VLSREKDKDVN) are compositionally biased toward basic and acidic residues. A compositionally biased stretch (polar residues) spans 294–303 (SDSIAQYEQR). Residues 320–334 (SASNGGSSTTSGVAG) are compositionally biased toward low complexity.

This sequence belongs to the peroxin-14 family. Interacts with PEX13 (via SH3 domain); forming the PEX13-PEX14 docking complex. Interacts with PEX5 (via WxxxF/Y motifs).

The protein localises to the peroxisome membrane. Component of the PEX13-PEX14 docking complex, a translocon channel that specifically mediates the import of peroxisomal cargo proteins bound to PEX5 receptor. The PEX13-PEX14 docking complex forms a large import pore which can be opened to a diameter of about 9 nm. Mechanistically, PEX5 receptor along with cargo proteins associates with the PEX14 subunit of the PEX13-PEX14 docking complex in the cytosol, leading to the insertion of the receptor into the organelle membrane with the concomitant translocation of the cargo into the peroxisome matrix. The protein is Peroxisomal membrane protein PEX14 of Pichia angusta (Yeast).